A 637-amino-acid polypeptide reads, in one-letter code: Type II restriction enzyme and methyltransferase RM.BcgI (637 aa).

In the C-terminal section; belongs to the N(4)/N(6)-methyltransferase family. In terms of assembly, heterotrimer of two A and one B subunit. Both subunits are necessary for DNA-binding, which is sequence non-specific. It depends on Mg(2+) as a cofactor.

The catalysed reaction is Endonucleolytic cleavage of DNA to give specific double-stranded fragments with terminal 5'-phosphates.. It catalyses the reaction a 2'-deoxyadenosine in DNA + S-adenosyl-L-methionine = an N(6)-methyl-2'-deoxyadenosine in DNA + S-adenosyl-L-homocysteine + H(+). DNA restriction requires S-adenosyl-L-methionine and Mg(2+), and is inhibited by S-adenosyl-homocysteine. SAM may be a cofactor for DNA restriction. Functionally, a B, G, H and S subtype restriction enzyme that recognizes the double-stranded sequence 5'-CGAN(6)TGC-3' and cleaves bilaterally and symmetrically 10 base pairs upstream and 12 base pairs downstream of the sequence to release a 34-base pair fragment. Methylation of the recognition sequence occurs on the adenine in either one or both strands; seems to methylate restricted DNA. This subunit has no methylation or DNA restriction activity on its own. This Heyndrickxia coagulans (Weizmannia coagulans) protein is Type II restriction enzyme and methyltransferase RM.BcgI.